Reading from the N-terminus, the 629-residue chain is 1-deoxy-D-xylulose-5-phosphate synthase (629 aa).

Residues H79 and 119–121 each bind thiamine diphosphate; that span reads SHA. D150 serves as a coordination point for Mg(2+). Thiamine diphosphate contacts are provided by residues 151–152, N180, Y292, and E377; that span reads GS. A Mg(2+)-binding site is contributed by N180.

The protein belongs to the transketolase family. DXPS subfamily. Homodimer. The cofactor is Mg(2+). Requires thiamine diphosphate as cofactor.

It catalyses the reaction D-glyceraldehyde 3-phosphate + pyruvate + H(+) = 1-deoxy-D-xylulose 5-phosphate + CO2. It participates in metabolic intermediate biosynthesis; 1-deoxy-D-xylulose 5-phosphate biosynthesis; 1-deoxy-D-xylulose 5-phosphate from D-glyceraldehyde 3-phosphate and pyruvate: step 1/1. Functionally, catalyzes the acyloin condensation reaction between C atoms 2 and 3 of pyruvate and glyceraldehyde 3-phosphate to yield 1-deoxy-D-xylulose-5-phosphate (DXP). The chain is 1-deoxy-D-xylulose-5-phosphate synthase from Tropheryma whipplei (strain TW08/27) (Whipple's bacillus).